A 391-amino-acid polypeptide reads, in one-letter code: Histamine H4 receptor (391 aa).

Topologically, residues 1–19 (MSESNSTGILPPAAQVPLA) are extracellular. Asparagine 5 carries N-linked (GlcNAc...) asparagine glycosylation. Residues 20-40 (FLMSSFAFAIMVGNAVVILAF) form a helical membrane-spanning segment. The Cytoplasmic segment spans residues 41-52 (VVDRNLRHRSNY). A helical membrane pass occupies residues 53-73 (FFLNLAISDFLVGLISIPLYI). Residues 74 to 87 (PHVLFNWNFGSGIC) lie on the Extracellular side of the membrane. Cysteines 87 and 166 form a disulfide. A helical transmembrane segment spans residues 88 to 108 (MFWLITDYLLCTASVYNIVLI). At 109 to 131 (SYDRYQSVSNAVSYRAQHTGIMK) the chain is on the cytoplasmic side. A helical transmembrane segment spans residues 132-152 (IVAQMVAVWILAFLVNGPMIL). Over 153-174 (ASDSWKNSTNTKDCEPGFVTEW) the chain is Extracellular. N-linked (GlcNAc...) asparagine glycosylation is present at asparagine 159. Residues 175-195 (YILTITMLLEFLLPVISVAYF) traverse the membrane as a helical segment. Topologically, residues 196-306 (NVQIYWSLWK…LLRGRKLARS (111 aa)) are cytoplasmic. The segment at 238–258 (TSNPGLKESAASRHSESPRRK) is disordered. The segment covering 247-256 (AASRHSESPR) has biased composition (basic and acidic residues). The helical transmembrane segment at 307 to 327 (LAILLSAFAICWAPYCLFTIV) threads the bilayer. Residues 328 to 343 (LSTYPRTERPKSVWYS) are Extracellular-facing. Residues 344–364 (IAFWLQWFNSFVNPFLYPLCH) traverse the membrane as a helical segment. Topologically, residues 365 to 391 (RRFQKAFWKILCVTKQPALSQNQSVSS) are cytoplasmic.

The protein belongs to the G-protein coupled receptor 1 family. In terms of assembly, interacts with TSPAN4.

The protein localises to the cell membrane. Its function is as follows. The H4 subclass of histamine receptors could mediate the histamine signals in peripheral tissues. Displays a significant level of constitutive activity (spontaneous activity in the absence of agonist). This is Histamine H4 receptor (Hrh4) from Mus musculus (Mouse).